Consider the following 701-residue polypeptide: Polyribonucleotide nucleotidyltransferase (701 aa).

Mg(2+)-binding residues include Asp-485 and Asp-491. The region spanning 552–611 (PRIIKIRINPEKIRDVIGKGGAVIRALTEETGTTIDITDDGTVMIACVNAEGGELAKKRI) is the KH domain. An S1 motif domain is found at 621-689 (GRVYDGTVLK…DKGRLRLSMK (69 aa)).

The protein belongs to the polyribonucleotide nucleotidyltransferase family. Mg(2+) is required as a cofactor.

It is found in the cytoplasm. The enzyme catalyses RNA(n+1) + phosphate = RNA(n) + a ribonucleoside 5'-diphosphate. Involved in mRNA degradation. Catalyzes the phosphorolysis of single-stranded polyribonucleotides processively in the 3'- to 5'-direction. The chain is Polyribonucleotide nucleotidyltransferase from Nitrosospira multiformis (strain ATCC 25196 / NCIMB 11849 / C 71).